The chain runs to 168 residues: Peptidoglycan-associated lipoprotein (168 aa).

The N-terminal stretch at 1–21 (MEMLKFGKFAALALAMAVAVG) is a signal peptide. C22 carries N-palmitoyl cysteine lipidation. C22 carries the S-diacylglycerol cysteine lipid modification. An OmpA-like domain is found at 56-168 (SDEAALRAIT…AQNRRVELKK (113 aa)). The interval 147–168 (RPVATGHDEQSWAQNRRVELKK) is disordered.

This sequence belongs to the Pal lipoprotein family. In terms of assembly, the Tol-Pal system is composed of five core proteins: the inner membrane proteins TolA, TolQ and TolR, the periplasmic protein TolB and the outer membrane protein Pal. They form a network linking the inner and outer membranes and the peptidoglycan layer.

It localises to the cell outer membrane. In terms of biological role, part of the Tol-Pal system, which plays a role in outer membrane invagination during cell division and is important for maintaining outer membrane integrity. This is Peptidoglycan-associated lipoprotein from Pseudomonas aeruginosa (strain ATCC 15692 / DSM 22644 / CIP 104116 / JCM 14847 / LMG 12228 / 1C / PRS 101 / PAO1).